A 610-amino-acid polypeptide reads, in one-letter code: UvrABC system protein C (610 aa).

One can recognise a GIY-YIG domain in the interval 16–94 (NQPGVYRMYD…IKRYQPRYNV (79 aa)). The 36-residue stretch at 204 to 239 (SQVIDALVARMEEASRALRFEEAARLRDQIQAVRRV) folds into the UVR domain.

Belongs to the UvrC family. In terms of assembly, interacts with UvrB in an incision complex.

It localises to the cytoplasm. Functionally, the UvrABC repair system catalyzes the recognition and processing of DNA lesions. UvrC both incises the 5' and 3' sides of the lesion. The N-terminal half is responsible for the 3' incision and the C-terminal half is responsible for the 5' incision. This chain is UvrABC system protein C, found in Edwardsiella ictaluri (strain 93-146).